Consider the following 426-residue polypeptide: Phosphoribosylamine--glycine ligase (426 aa).

The region spanning 113-320 (KSLMTEAKIP…LLELLYRAST (208 aa)) is the ATP-grasp domain. Position 139 to 200 (139 to 200 (LESKSIPIVI…EEFMEGQEAS (62 aa))) interacts with ATP. Mg(2+) contacts are provided by Glu-290 and Asn-292.

Belongs to the GARS family. Mg(2+) serves as cofactor. Mn(2+) is required as a cofactor.

The catalysed reaction is 5-phospho-beta-D-ribosylamine + glycine + ATP = N(1)-(5-phospho-beta-D-ribosyl)glycinamide + ADP + phosphate + H(+). Its pathway is purine metabolism; IMP biosynthesis via de novo pathway; N(1)-(5-phospho-D-ribosyl)glycinamide from 5-phospho-alpha-D-ribose 1-diphosphate: step 2/2. The polypeptide is Phosphoribosylamine--glycine ligase (Leptospira interrogans serogroup Icterohaemorrhagiae serovar copenhageni (strain Fiocruz L1-130)).